We begin with the raw amino-acid sequence, 521 residues long: Transcription activator of gluconeogenesis SS1G_02293 (521 aa).

Over residues 1–12 (MSGETEIDDPEV) the composition is skewed to acidic residues. The disordered stretch occupies residues 1 to 75 (MSGETEIDDP…KFDPKDPLRP (75 aa)). Basic and acidic residues-rich tracts occupy residues 21 to 49 (YSDHEQELDVVGKEDDNQEMAEQKVRPDG) and 65 to 74 (PKFDPKDPLR). The zn(2)-C6 fungal-type DNA-binding region spans 84–112 (CFACQRAHLTCGDERPCQRCIKRGLADAC). Disordered stretches follow at residues 273 to 308 (SGSAETPPQDSSAGMPQNVGDLGYNNNPAFNNNPPF), 322 to 358 (VAPPGAHRPAKRQDTKSGPSGKLGPSSALGKRNRDPS), and 478 to 501 (NTGNSGASSSGSSGRGSFTTPRMR). Residues 275-287 (SAETPPQDSSAGM) show a composition bias toward polar residues. Composition is skewed to low complexity over residues 297–308 (NNNPAFNNNPPF), 337–351 (KSGPSGKLGPSSALG), and 480–494 (GNSGASSSGSSGRGS). Residues 426–497 (TLFEYEDFML…GSSGRGSFTT (72 aa)) form the PAS domain.

The protein belongs to the ERT1/acuK family.

It localises to the nucleus. Transcription factor which regulates nonfermentable carbon utilization. Activator of gluconeogenetic genes. This Sclerotinia sclerotiorum (strain ATCC 18683 / 1980 / Ss-1) (White mold) protein is Transcription activator of gluconeogenesis SS1G_02293.